Consider the following 543-residue polypeptide: Phosphoenolpyruvate carboxykinase (ATP) (543 aa).

244–251 (GLSGTGKT) contributes to the ATP binding site.

It belongs to the phosphoenolpyruvate carboxykinase (ATP) family.

The enzyme catalyses oxaloacetate + ATP = phosphoenolpyruvate + ADP + CO2. Its pathway is carbohydrate biosynthesis; gluconeogenesis. In Kluyveromyces lactis (strain ATCC 8585 / CBS 2359 / DSM 70799 / NBRC 1267 / NRRL Y-1140 / WM37) (Yeast), this protein is Phosphoenolpyruvate carboxykinase (ATP) (PCK1).